Here is a 229-residue protein sequence, read N- to C-terminus: Cytochrome c oxidase subunit 2 (229 aa).

Residues 1–26 (MATWSNLGLQDSASPLMEQLNFFHDH) are Mitochondrial intermembrane-facing. Residues 27 to 48 (TLLILIMITILVGYLMLMLFFN) form a helical membrane-spanning segment. At 49–62 (KFTNRFLLHGQTIE) the chain is on the mitochondrial matrix side. Residues 63-82 (IIWTILPAIVLMFIALPSLR) traverse the membrane as a helical segment. The Mitochondrial intermembrane portion of the chain corresponds to 83–229 (ILYLLDEINS…IKWITAMNSN (147 aa)). Cu cation-binding residues include H161, C196, E198, C200, H204, and M207. A Mg(2+)-binding site is contributed by E198.

This sequence belongs to the cytochrome c oxidase subunit 2 family. In terms of assembly, component of the cytochrome c oxidase (complex IV, CIV), a multisubunit enzyme composed of a catalytic core of 3 subunits and several supernumerary subunits. The complex exists as a monomer or a dimer and forms supercomplexes (SCs) in the inner mitochondrial membrane with ubiquinol-cytochrome c oxidoreductase (cytochrome b-c1 complex, complex III, CIII). Cu cation is required as a cofactor.

The protein localises to the mitochondrion inner membrane. The catalysed reaction is 4 Fe(II)-[cytochrome c] + O2 + 8 H(+)(in) = 4 Fe(III)-[cytochrome c] + 2 H2O + 4 H(+)(out). Functionally, component of the cytochrome c oxidase, the last enzyme in the mitochondrial electron transport chain which drives oxidative phosphorylation. The respiratory chain contains 3 multisubunit complexes succinate dehydrogenase (complex II, CII), ubiquinol-cytochrome c oxidoreductase (cytochrome b-c1 complex, complex III, CIII) and cytochrome c oxidase (complex IV, CIV), that cooperate to transfer electrons derived from NADH and succinate to molecular oxygen, creating an electrochemical gradient over the inner membrane that drives transmembrane transport and the ATP synthase. Cytochrome c oxidase is the component of the respiratory chain that catalyzes the reduction of oxygen to water. Electrons originating from reduced cytochrome c in the intermembrane space (IMS) are transferred via the dinuclear copper A center (CU(A)) of subunit 2 and heme A of subunit 1 to the active site in subunit 1, a binuclear center (BNC) formed by heme A3 and copper B (CU(B)). The BNC reduces molecular oxygen to 2 water molecules using 4 electrons from cytochrome c in the IMS and 4 protons from the mitochondrial matrix. This is Cytochrome c oxidase subunit 2 (COII) from Simulium vittatum (Striped black fly).